Consider the following 776-residue polypeptide: Venom dipeptidyl peptidase 4 (776 aa).

Residues 1 to 25 (MVPLRSFVLLNSLFLVLLAARTVVT) form the signal peptide. Asparagine 44, asparagine 66, and asparagine 329 each carry an N-linked (GlcNAc...) asparagine glycan. Cystine bridges form between cysteine 449–cysteine 452 and cysteine 462–cysteine 480. Residues asparagine 504 and asparagine 577 are each glycosylated (N-linked (GlcNAc...) asparagine). Serine 638 acts as the Charge relay system in catalysis. Cysteine 658 and cysteine 769 are joined by a disulfide. Asparagine 688 and asparagine 693 each carry an N-linked (GlcNAc...) asparagine glycan. Active-site charge relay system residues include aspartate 717 and histidine 749.

This sequence belongs to the peptidase S9B family. DPPIV subfamily. In terms of tissue distribution, expressed by the venom gland.

Its subcellular location is the secreted. It carries out the reaction Release of an N-terminal dipeptide, Xaa-Yaa-|-Zaa-, from a polypeptide, preferentially when Yaa is Pro, provided Zaa is neither Pro nor hydroxyproline.. Its activity is regulated as follows. Inhibited by diprotin A. Its function is as follows. Venom dipeptidyl-peptidase which removes N-terminal dipeptides sequentially from polypeptides having unsubstituted N-termini provided that the penultimate residue is proline. May process venom proteins into their active forms and/or modulate the chemotactic activity of immune cells after the insect sting. In Vespula vulgaris (Yellow jacket), this protein is Venom dipeptidyl peptidase 4.